Reading from the N-terminus, the 331-residue chain is DNA-directed RNA polymerase subunit alpha (331 aa).

Positions 1-230 (MKNIKTSPYI…KQMSVFNSEW (230 aa)) are alpha N-terminal domain (alpha-NTD). Residues 247 to 331 (LKPLLQKIEA…ALQKRLNKLK (85 aa)) are alpha C-terminal domain (alpha-CTD).

The protein belongs to the RNA polymerase alpha chain family. In terms of assembly, homodimer. The RNAP catalytic core consists of 2 alpha, 1 beta/beta' and 1 omega subunit. When a sigma factor is associated with the core the holoenzyme is formed, which can initiate transcription.

It catalyses the reaction RNA(n) + a ribonucleoside 5'-triphosphate = RNA(n+1) + diphosphate. In terms of biological role, DNA-dependent RNA polymerase catalyzes the transcription of DNA into RNA using the four ribonucleoside triphosphates as substrates. The protein is DNA-directed RNA polymerase subunit alpha of Wolinella succinogenes (strain ATCC 29543 / DSM 1740 / CCUG 13145 / JCM 31913 / LMG 7466 / NCTC 11488 / FDC 602W) (Vibrio succinogenes).